Here is a 300-residue protein sequence, read N- to C-terminus: Energy-coupling factor transporter ATP-binding protein EcfA2 (300 aa).

Residues 3–258 (IKAKNIVKIY…NKFLIENKML (256 aa)) enclose the ABC transporter domain. Residue 40–47 (GQTGSGKT) participates in ATP binding.

This sequence belongs to the ABC transporter superfamily. Energy-coupling factor EcfA family. In terms of assembly, forms a stable energy-coupling factor (ECF) transporter complex composed of 2 membrane-embedded substrate-binding proteins (S component), 2 ATP-binding proteins (A component) and 2 transmembrane proteins (T component).

The protein localises to the cell membrane. ATP-binding (A) component of a common energy-coupling factor (ECF) ABC-transporter complex. Unlike classic ABC transporters this ECF transporter provides the energy necessary to transport a number of different substrates. This chain is Energy-coupling factor transporter ATP-binding protein EcfA2, found in Mesomycoplasma hyopneumoniae (strain 232) (Mycoplasma hyopneumoniae).